We begin with the raw amino-acid sequence, 108 residues long: ATP-dependent Clp protease adapter protein ClpS (108 aa).

The protein belongs to the ClpS family. Binds to the N-terminal domain of the chaperone ClpA.

Involved in the modulation of the specificity of the ClpAP-mediated ATP-dependent protein degradation. The protein is ATP-dependent Clp protease adapter protein ClpS of Cupriavidus metallidurans (strain ATCC 43123 / DSM 2839 / NBRC 102507 / CH34) (Ralstonia metallidurans).